The primary structure comprises 425 residues: tRNA(Ile)-lysidine synthase (425 aa).

27–32 (SGGLDS) lines the ATP pocket.

Belongs to the tRNA(Ile)-lysidine synthase family.

Its subcellular location is the cytoplasm. The catalysed reaction is cytidine(34) in tRNA(Ile2) + L-lysine + ATP = lysidine(34) in tRNA(Ile2) + AMP + diphosphate + H(+). In terms of biological role, ligates lysine onto the cytidine present at position 34 of the AUA codon-specific tRNA(Ile) that contains the anticodon CAU, in an ATP-dependent manner. Cytidine is converted to lysidine, thus changing the amino acid specificity of the tRNA from methionine to isoleucine. The sequence is that of tRNA(Ile)-lysidine synthase from Streptococcus pneumoniae (strain Hungary19A-6).